Reading from the N-terminus, the 389-residue chain is Cytochrome b (389 aa).

8 consecutive transmembrane segments (helical) span residues Phe32–Met52, Trp76–Leu98, Leu113–Val133, Phe179–Ile199, Phe225–Phe245, Leu290–Ile310, Leu325–Ala345, and Leu353–Val373. Residues His82 and His96 each contribute to the heme b site. Heme b-binding residues include His183 and His197.

The protein belongs to the cytochrome b family. The main subunits of complex b-c1 are: cytochrome b, cytochrome c1 and the Rieske protein. Heme b serves as cofactor.

It localises to the mitochondrion inner membrane. Its function is as follows. Component of the ubiquinol-cytochrome c reductase complex (complex III or cytochrome b-c1 complex) that is part of the mitochondrial respiratory chain. The b-c1 complex mediates electron transfer from ubiquinol to cytochrome c. Contributes to the generation of a proton gradient across the mitochondrial membrane that is then used for ATP synthesis. In Dictyostelium discoideum (Social amoeba), this protein is Cytochrome b (cytB).